The sequence spans 138 residues: Transcription antitermination protein NusB (138 aa).

This sequence belongs to the NusB family.

Involved in transcription antitermination. Required for transcription of ribosomal RNA (rRNA) genes. Binds specifically to the boxA antiterminator sequence of the ribosomal RNA (rrn) operons. This Serratia proteamaculans (strain 568) protein is Transcription antitermination protein NusB.